The following is a 1248-amino-acid chain: MSETKWTKEQYAAITQKDCNLLVAAAAGAGKTAVLVERIIRKITDKENPVDIDSLLVVTFTNAAATEMRERIGAAISDTIEKNQGSKNISRQLILLNKASITTIHSFCLEVIRSNFQSIEIDPGFKILDETEATLLKSETLSDLFEEIYEDAEENEDFFELLESYGGNRDDLKIQDMVMSIYSFVQSYPWPEKWLEQQIESYNFEVGNDFGETTWGRILLETSLMRLEGLRDIMNEACAKIKNAQGLEKYLSVFIEDNDNLEKLIGICKTGMNWDQLYNYVNSFEFRNLPRCGKDAEKSVQESVKKIRDELKSVINGLRDEVFFMESDEIASDLKTMYPILKCVSRLVMDFGRRYAHKKSQRASVDFNDLEHFCLNILAETDKDGNIRPTKIAQNYKDKFTEILVDEYQDSNLVQEIIINMISKKDIGSPNVFMVGDVKQSIYRFRQAKPELFLEKYNNYSIDEDSSYRKILLFKNFRSRKDVVDGINYIFKQIMSQKVGELDYNEIEELNPGAGFSPCQNEETVVGGAIELHLIETSVGDNTVLSEGSEPMDEQDFPEEDEILDNIQKEARMVANRIIELFQADKDGKKYAVYDKKLGEYRNVRFSDIVILLRTTRNWTEVFSAELANADIPVFADTGSGFFKTPEVQVVLSLLQIIDNPYQDIPLLAVLRSPIVNFSTADLTDVRLMNRNASIFEALKETAVHDTQVSKKASDFLQKLEKWRDMSLYMSTHELIWQLYNETGYFSIVGAMQDGERKQANLKILFERALQYENTSYSGLFNFISFIDKLKTNKGDMGSAKVLGENDNVVRLMSIHKSKGLEFPVVFLCGCGKKFNMQDMYKSILLHQELGFGPDFVDYKKRIKYPSIPKQAIAQKIRIETLSEEMRILYVAMTRAREKLIITGSVNNIEKSALKWLGTAQSNDNKFPPHNMLKAQNYLDWICPSVMRHKDSVILRNAAGLGVDYSGPTISDDSSWTIILADQSDIAVAKRFETDTQDREDITKWLQEKGSADSGDSHEIHRRLDWKYTYRDFAQIPSKISVTELKRYFHLNNDEDNSQLQYKTATIKKPAFLEGKKGLSPAEKGTAMHFVMQHLDFHNEDIAGQVKIMVKKELLTEIQAKSIDIMKISAFINSVIGKRMLKSVKVYREVPFNIELPYKEIYPQLPDVSDYEDKILLQGVVDCYFEEEDHIVLIDYKTDYIPYGDKQSVKEKYRLQISYYSRALEMLTLKRVKERYIYLFSTGEIVEM.

The UvrD-like helicase ATP-binding domain occupies 4-480 (TKWTKEQYAA…ILLFKNFRSR (477 aa)). ATP is bound at residue 25 to 32 (AAAGAGKT). The 298-residue stretch at 523-820 (ETVVGGAIEL…RLMSIHKSKG (298 aa)) folds into the UvrD-like helicase C-terminal domain.

Belongs to the helicase family. AddA subfamily. Heterodimer of AddA and AddB/RexB. It depends on Mg(2+) as a cofactor.

It carries out the reaction Couples ATP hydrolysis with the unwinding of duplex DNA by translocating in the 3'-5' direction.. The catalysed reaction is ATP + H2O = ADP + phosphate + H(+). Functionally, the heterodimer acts as both an ATP-dependent DNA helicase and an ATP-dependent, dual-direction single-stranded exonuclease. Recognizes the chi site generating a DNA molecule suitable for the initiation of homologous recombination. The AddA nuclease domain is required for chi fragment generation; this subunit has the helicase and 3' -&gt; 5' nuclease activities. In Ruminiclostridium cellulolyticum (strain ATCC 35319 / DSM 5812 / JCM 6584 / H10) (Clostridium cellulolyticum), this protein is ATP-dependent helicase/nuclease subunit A.